We begin with the raw amino-acid sequence, 993 residues long: MRGMSYNITHECDAINILSDNLHEGAISEDMVALSGPAIELLENNVGSSKNSYQEDEGSSSIDENAPLISIKRKRRIRTVKSTSNKELVQRKASKPTKQKSVFTPLEQQYLELKKNYQETILAIEVGYKFRFFGKDAKIASEVLGISCYFEHNFLNASVPSYRIDYHLERLINFGLKVAVVRQTETAALKSTSSSRNTLFDRRVARVLTKGTTLDDSFFRFEQTQHGTLQASQFILCVADNVDKSKAKSGRVQVGLIAIQLSSGTTVYDHFQDDFLRSELQTRLSHFQPCELIYSNKLSSESVALLNHYVSTEKTCGRVVRVQHAVQQDVKLALENLQDFFSSKCIMSGSKIIELHMEKVKSLHSLSIICLDMAISYLMEFSLEDLFVASNFYQPFDSISSMVLSKQALEGLELFVNQTDHTPVGSLFWVLDRTYTRFGQRMLQRWLQKPLVDKENIIERLDAVEELAFNSNSQVQAIRKMLYRLPDLEKGLSRIYYQRGFYKAASAFSKNSYSCFKSALLRRLIQQLPSISSIIDHFLGMFDQKEAENNNKVDMFKDIDNFDLSEEPNDVDYELAQEIRELKMSILMVRTEMDFHLQELRDYLEYPNLEFSIWGNVKFCIEVSKGCKKIPPDWIKLSSTRSLFRFHTPKIQSLLIELSSHEENLTISSEKIYRSFLSRISEHYNELRNVTTVLGTLDCLISFARISSQSGYTRPEFSDKELLIHESRHPMIELLSDKSFVPNHIHLSSDGVRCLLITGPNMGGKSSFVKQLALSAIMAQSGCFVPAKSALLPIFDSILIRMGSSDNLSVNMSTFMVEMLETKEVLSKATEKSMVIIDELGRGTSTIDGEAISYAVLHYLNQYIKSYLLFVTHFPSLGILERRFEGQLRCFHMGYLKSKEDFETSVSQSISFLYKLVPGVASKSYGLNVARMAGIPFSILSRATEISENYEKKHRNARKNVFIRKVAKLLMILNAEEIDFKRLFYDLTAFEEI.

The segment at 97-211 is mispair-binding domain; it reads TKQKSVFTPL…RRVARVLTKG (115 aa). An ATP-binding site is contributed by 759-766; it reads GPNMGGKS.

This sequence belongs to the DNA mismatch repair MutS family. MSH3 subfamily. As to quaternary structure, heterodimer consisting of msh2-msh3 (MutS beta). Forms a ternary complex with MutL alpha (mlh1-pms1).

The protein resides in the nucleus. Component of the post-replicative DNA mismatch repair system (MMR). Heterodimerizes with msh2 to form MutS beta, which binds to DNA mismatches thereby initiating DNA repair. Msh3 provides substrate-binding and substrate specificity to the complex. When bound, the MutS beta heterodimer bends the DNA helix and shields approximately 20 base pairs. Acts mainly to repair insertion-deletion loops (IDLs) from 2 to 13 nucleotides in size, but can also repair base-base and single insertion-deletion mismatches that occur during replication. After mismatch binding, forms a ternary complex with the MutL alpha heterodimer, which is thought to be responsible for directing the downstream MMR events, including strand discrimination, excision, and resynthesis. ATP binding and hydrolysis play a pivotal role in mismatch repair functions. Involved in termination of copy-synthesis during mating-type switching. In Schizosaccharomyces pombe (strain 972 / ATCC 24843) (Fission yeast), this protein is DNA mismatch repair protein msh3 (msh3).